Here is a 299-residue protein sequence, read N- to C-terminus: Proline iminopeptidase (299 aa).

In terms of domain architecture, AB hydrolase-1 spans 26–272; that stretch reads VLLLAGGPGF…QFLYCANGSH (247 aa). Catalysis depends on Ser-103, which acts as the Nucleophile. Residue Asp-245 is part of the active site. The Proton donor role is filled by His-272.

It belongs to the peptidase S33 family. Monomer.

It carries out the reaction Release of N-terminal proline from a peptide.. In terms of biological role, releases the N-terminal proline from various substrates. This Chitinophaga pinensis (strain ATCC 43595 / DSM 2588 / LMG 13176 / NBRC 15968 / NCIMB 11800 / UQM 2034) protein is Proline iminopeptidase.